The primary structure comprises 425 residues: Proline--tRNA ligase (425 aa).

This sequence belongs to the class-II aminoacyl-tRNA synthetase family. ProS type 2 subfamily. As to quaternary structure, homodimer.

The protein resides in the cytoplasm. The catalysed reaction is tRNA(Pro) + L-proline + ATP = L-prolyl-tRNA(Pro) + AMP + diphosphate. Catalyzes the attachment of proline to tRNA(Pro) in a two-step reaction: proline is first activated by ATP to form Pro-AMP and then transferred to the acceptor end of tRNA(Pro). This is Proline--tRNA ligase from Anaplasma marginale (strain St. Maries).